Here is an 853-residue protein sequence, read N- to C-terminus: Leucine-rich repeat and death domain-containing protein 1 (853 aa).

The disordered stretch occupies residues 1-78 (MSEDGSNVEP…EEKNTGIPFS (78 aa)). The segment covering 19 to 31 (LEEPGSEISDLLD) has biased composition (acidic residues). Polar residues predominate over residues 56–65 (QSAASFTSQL). LRR repeat units follow at residues 133 to 157 (MKSDNFTVNLDAKGLQEFPVDIVKV), 159 to 180 (YVKYLYLDKNQIKNFQGIDPGD), 183 to 204 (GLEILSLQENGLSSIPLEIQLF), 206 to 227 (NLKILNASYNEISQIPKELLQL), 229 to 251 (NMRQLLLNSNHIDTLPSGLEHLR), 252 to 274 (YLETLSLGKNMLTYIPDSLSSLK), 275 to 297 (NLRILNLEYNQLTIFSKSLCFLP), 298 to 319 (KLNSLNLTGNMIGSLPKEVREL), 321 to 342 (NLESLLMDHNKLTFLAVEIFQL), 344 to 365 (KIKELHLADNKLEAISPKIENF), 367 to 388 (ELRLLNLDKNLLQSIPKKISHC), 390 to 411 (NLESLSLSDNNIEELPKKIRKL), 413 to 435 (NLRQLHVNRNKMITMTEEISHLS), 436 to 457 (NIHILEFSGNQITHVPIEIKNC), 459 to 481 (KITRVELNYNNIMYFPVGLCALQ), 482 to 503 (SLDYLSFNGNYISEIPVDMSFS), 505 to 527 (QLLHLELNRNKLTVFSKHLCSLT), 528 to 549 (NLEYLDLAKNQIMTIPSCISAM), 551 to 573 (SLHVLILSDNKFESFPKELCSLK), 574 to 596 (NLRVLDISENKLQKIPLEISKLK), 597 to 618 (RIQKLNLSNNIFTNFPVELCQL), 620 to 641 (TLEELNISQTSGKKLTRLPEEV), 646 to 668 (QLKILNISNNAIKDIPKNIGELR), 669 to 690 (SLVSFYASNNQISSLPSSFLSL), 692 to 713 (VLQSLDLRGNNMTALPSGIYKL), and 715 to 736 (SLKEINFDDNPLMRPPMEICKG). Positions 757–845 (LEKIFNIVAN…DIMDKITALN (89 aa)) constitute a Death domain.

The protein is Leucine-rich repeat and death domain-containing protein 1 (Lrrd1) of Mus musculus (Mouse).